The chain runs to 815 residues: Ent-sandaracopimara-8(14),15-diene synthase, chloroplastic (815 aa).

The transit peptide at 1 to 38 (MLPSSICSMGQIPRTSPHYYGMLPKQMSKGHPPMVTRA) directs the protein to the chloroplast. Mg(2+) contacts are provided by Asp-550, Asp-554, Asn-696, Thr-700, and Glu-704. The short motif at 550-554 (DDFFD) is the DDXXD motif element.

This sequence belongs to the terpene synthase family. Requires Mg(2+) as cofactor.

It is found in the plastid. Its subcellular location is the chloroplast. It catalyses the reaction ent-copalyl diphosphate = ent-sandaracopimara-8(14),15-diene + diphosphate. The catalysed reaction is 9alpha-copalyl diphosphate = (12E)-9alpha-labda-8(17),12,14-triene + diphosphate. Involved in the biosynthesis of oryzalexin A-F phytoalexins. Catalyzes the conversion of ent-copalyl diphosphate to the phytoalexin precursor ent-sandaracopimaradiene. The sequence is that of Ent-sandaracopimara-8(14),15-diene synthase, chloroplastic from Oryza sativa subsp. japonica (Rice).